Here is a 735-residue protein sequence, read N- to C-terminus: 5-methyltetrahydropteroyltriglutamate--homocysteine methyltransferase (735 aa).

Residues 15–18 (REFK) and K104 each bind 5-methyltetrahydropteroyltri-L-glutamate. L-homocysteine is bound by residues 409 to 411 (IGS) and E462. L-methionine is bound by residues 409-411 (IGS) and E462. Residues 493–494 (RC) and W539 contribute to the 5-methyltetrahydropteroyltri-L-glutamate site. An L-homocysteine-binding site is contributed by D577. D577 serves as a coordination point for L-methionine. E583 is a binding site for 5-methyltetrahydropteroyltri-L-glutamate. Positions 618, 620, and 642 each coordinate Zn(2+). The active-site Proton donor is H672. Position 704 (C704) interacts with Zn(2+).

Belongs to the vitamin-B12 independent methionine synthase family. Requires Zn(2+) as cofactor.

The enzyme catalyses 5-methyltetrahydropteroyltri-L-glutamate + L-homocysteine = tetrahydropteroyltri-L-glutamate + L-methionine. The protein operates within amino-acid biosynthesis; L-methionine biosynthesis via de novo pathway; L-methionine from L-homocysteine (MetE route): step 1/1. Functionally, catalyzes the transfer of a methyl group from 5-methyltetrahydrofolate to homocysteine resulting in methionine formation. The chain is 5-methyltetrahydropteroyltriglutamate--homocysteine methyltransferase from Thermotoga petrophila (strain ATCC BAA-488 / DSM 13995 / JCM 10881 / RKU-1).